Here is a 63-residue protein sequence, read N- to C-terminus: Conotoxin PnMRCL-0111 (63 aa).

The signal sequence occupies residues 1–19; sequence MRCLPVFIVLLLLIVSAPG. Residues 20–49 constitute a propeptide that is removed on maturation; the sequence is FDARPKTEDDVPLSSFHDDLQRTVRTLLDI. A Tryptophan amide modification is found at tryptophan 62.

The protein belongs to the conotoxin T superfamily. In terms of processing, contains 2 disulfide bonds that can be either 'C1-C3, C2-C4' or 'C1-C4, C2-C3', since these disulfide connectivities have been observed for conotoxins with cysteine framework V (for examples, see AC P0DQQ7 and AC P81755). In terms of tissue distribution, expressed by the venom duct.

The protein localises to the secreted. The polypeptide is Conotoxin PnMRCL-0111 (Conus pennaceus (Feathered cone)).